The chain runs to 314 residues: Deoxymugineic acid synthase 1 (314 aa).

Aspartate 44 lines the NADP(+) pocket. Tyrosine 49 serves as the catalytic Proton donor. Residue histidine 112 coordinates substrate. Residues 158-159, glutamine 180, 258-266, and 273-281 contribute to the NADP(+) site; these read CN, FDEGRMKEN, and ELSEEERQR.

It belongs to the aldo/keto reductase family.

It catalyses the reaction 2'-deoxymugineate + NAD(+) = 3''-deamino-3''-oxonicotianamine + NADH + H(+). The catalysed reaction is 2'-deoxymugineate + NADP(+) = 3''-deamino-3''-oxonicotianamine + NADPH + H(+). Its pathway is siderophore biosynthesis. Catalyzes the reduction of a 3''-keto intermediate during the biosynthesis of 2'-deoxymugineic acid (DMA) from L-Met. Involved in the formation of phytosiderophores (MAs) belonging to the mugineic acid family and required to acquire iron. The protein is Deoxymugineic acid synthase 1 of Zea mays (Maize).